Here is a 629-residue protein sequence, read N- to C-terminus: Replication protein A 70 kDa DNA-binding subunit D (629 aa).

Residues 112–135 (LDSKSGEEEAREPKKQKLEHSPVS) form a disordered region. A compositionally biased stretch (basic and acidic residues) spans 115-131 (KSGEEEAREPKKQKLEH). The OB DNA-binding region spans 194–280 (WTIKVRVTNK…QNDYEMTLNE (87 aa)). The C4-type zinc-finger motif lies at 492-512 (CKTCNKKVTEALDSGYWCEGC).

It belongs to the replication factor A protein 1 family. Heterotrimer of RPA1, RPA2 and RPA3 (canonical replication protein A complex).

The protein localises to the nucleus. Component of the replication protein A complex (RPA) required for DNA recombination, repair and replication. The activity of RPA is mediated by single-stranded DNA binding and protein interactions. Probably involved in repair of double-strand DNA breaks (DSBs) induced by genotoxic stresses. The chain is Replication protein A 70 kDa DNA-binding subunit D (RPA1D) from Arabidopsis thaliana (Mouse-ear cress).